Consider the following 203-residue polypeptide: Holliday junction branch migration complex subunit RuvA (203 aa).

The tract at residues 1 to 65 (MIAYIHGKLL…EDAFDLYGFP (65 aa)) is domain I. The tract at residues 66-144 (CFDDREVFRT…TLKSATVRSG (79 aa)) is domain II. Positions 145 to 155 (ACPVEGDRSEF) are flexible linker. The segment at 155–203 (FLDALSGLRNLGYGDDEVRDFLKDIFDEEPDLDAGGAIRVALKKISQNK) is domain III.

This sequence belongs to the RuvA family. Homotetramer. Forms an RuvA(8)-RuvB(12)-Holliday junction (HJ) complex. HJ DNA is sandwiched between 2 RuvA tetramers; dsDNA enters through RuvA and exits via RuvB. An RuvB hexamer assembles on each DNA strand where it exits the tetramer. Each RuvB hexamer is contacted by two RuvA subunits (via domain III) on 2 adjacent RuvB subunits; this complex drives branch migration. In the full resolvosome a probable DNA-RuvA(4)-RuvB(12)-RuvC(2) complex forms which resolves the HJ.

It localises to the cytoplasm. Functionally, the RuvA-RuvB-RuvC complex processes Holliday junction (HJ) DNA during genetic recombination and DNA repair, while the RuvA-RuvB complex plays an important role in the rescue of blocked DNA replication forks via replication fork reversal (RFR). RuvA specifically binds to HJ cruciform DNA, conferring on it an open structure. The RuvB hexamer acts as an ATP-dependent pump, pulling dsDNA into and through the RuvAB complex. HJ branch migration allows RuvC to scan DNA until it finds its consensus sequence, where it cleaves and resolves the cruciform DNA. In Maridesulfovibrio salexigens (strain ATCC 14822 / DSM 2638 / NCIMB 8403 / VKM B-1763) (Desulfovibrio salexigens), this protein is Holliday junction branch migration complex subunit RuvA.